Reading from the N-terminus, the 181-residue chain is Translationally-controlled tumor protein homolog (181 aa).

The region spanning 1 to 181 (MLIFKDAFTD…VKEALVEEKQ (181 aa)) is the TCTP domain.

It belongs to the TCTP family.

It is found in the cytoplasm. In terms of biological role, involved in calcium binding and microtubule stabilization. This Wuchereria bancrofti protein is Translationally-controlled tumor protein homolog.